A 611-amino-acid chain; its full sequence is Cilia- and flagella-associated protein 100 (611 aa).

The span at 1-17 (MSEIPSTIVSKNMTNDK) shows a compositional bias: polar residues. Positions 1 to 57 (MSEIPSTIVSKNMTNDKNSLESMNISSSSSTEENPKKQARKNEEHGPDPSANPFHLS) are disordered. Residues 20 to 32 (LESMNISSSSSTE) show a composition bias toward low complexity. The span at 33–47 (ENPKKQARKNEEHGP) shows a compositional bias: basic and acidic residues. 3 coiled-coil regions span residues 101-128 (SLRRQLQLEDKQEDLEARAEAEHQRAFR), 164-203 (ALDVKRREIQRLETLATKEEARLERAEKSLEKDAALFDEF), and 230-257 (LEIRDLTTQIVNIKSEISRFEDTLKHYK). 2 disordered regions span residues 287–323 (EVSEASKESSVNSTPGDKGPGIKGKASSMWAKEGQGT) and 338–380 (SPSY…GEEP). Positions 338–357 (SPSYLSSPQQGSQPSESSGG) are enriched in low complexity. 2 coiled-coil regions span residues 393–432 (VFRELEEQNLSLIQNSQETEKTLEELSHTLKHTQIRMDRE) and 526–578 (QVKI…RGRT).

This sequence belongs to the CFAP100 family.

The protein localises to the cytoplasm. Its subcellular location is the cytoskeleton. The protein resides in the cilium axoneme. Its function is as follows. May play a role in ciliary/flagellar motility by regulating the assembly and the activity of axonemal inner dynein arm. The protein is Cilia- and flagella-associated protein 100 of Homo sapiens (Human).